A 543-amino-acid chain; its full sequence is Cytochrome P450 1B1 (543 aa).

Cysteine 470 is a heme binding site.

Belongs to the cytochrome P450 family. It depends on heme as a cofactor.

It is found in the endoplasmic reticulum membrane. The protein localises to the microsome membrane. It localises to the mitochondrion. It carries out the reaction an organic molecule + reduced [NADPH--hemoprotein reductase] + O2 = an alcohol + oxidized [NADPH--hemoprotein reductase] + H2O + H(+). The catalysed reaction is 17beta-estradiol + reduced [NADPH--hemoprotein reductase] + O2 = 2-hydroxy-17beta-estradiol + oxidized [NADPH--hemoprotein reductase] + H2O + H(+). It catalyses the reaction 17beta-estradiol + reduced [NADPH--hemoprotein reductase] + O2 = 4-hydroxy-17beta-estradiol + oxidized [NADPH--hemoprotein reductase] + H2O + H(+). The enzyme catalyses estrone + reduced [NADPH--hemoprotein reductase] + O2 = 2-hydroxyestrone + oxidized [NADPH--hemoprotein reductase] + H2O + H(+). It carries out the reaction estrone + reduced [NADPH--hemoprotein reductase] + O2 = 4-hydroxyestrone + oxidized [NADPH--hemoprotein reductase] + H2O + H(+). The catalysed reaction is testosterone + reduced [NADPH--hemoprotein reductase] + O2 = 6beta,17beta-dihydroxyandrost-4-en-3-one + oxidized [NADPH--hemoprotein reductase] + H2O + H(+). It catalyses the reaction progesterone + reduced [NADPH--hemoprotein reductase] + O2 = 6beta-hydroxyprogesterone + oxidized [NADPH--hemoprotein reductase] + H2O + H(+). The enzyme catalyses progesterone + reduced [NADPH--hemoprotein reductase] + O2 = 16alpha-hydroxyprogesterone + oxidized [NADPH--hemoprotein reductase] + H2O + H(+). It carries out the reaction all-trans-retinol + reduced [NADPH--hemoprotein reductase] + O2 = all-trans-retinal + oxidized [NADPH--hemoprotein reductase] + 2 H2O + H(+). The catalysed reaction is all-trans-retinal + reduced [NADPH--hemoprotein reductase] + O2 = all-trans-retinoate + oxidized [NADPH--hemoprotein reductase] + H2O + 2 H(+). It catalyses the reaction (5Z,8Z,11Z,14Z)-eicosatetraenoate + reduced [NADPH--hemoprotein reductase] + O2 = (8R,9S)-epoxy-(5Z,11Z,14Z)-eicosatrienoate + oxidized [NADPH--hemoprotein reductase] + H2O + H(+). The enzyme catalyses (5Z,8Z,11Z,14Z)-eicosatetraenoate + reduced [NADPH--hemoprotein reductase] + O2 = (11R,12S)-epoxy-(5Z,8Z,14Z)-eicosatrienoate + oxidized [NADPH--hemoprotein reductase] + H2O + H(+). It carries out the reaction (5Z,8Z,11Z,14Z)-eicosatetraenoate + reduced [NADPH--hemoprotein reductase] + O2 = (11S,12R)-epoxy-(5Z,8Z,14Z)-eicosatrienoate + oxidized [NADPH--hemoprotein reductase] + H2O + H(+). The catalysed reaction is (5Z,8Z,11Z,14Z)-eicosatetraenoate + reduced [NADPH--hemoprotein reductase] + O2 = (14S,15R)-epoxy-(5Z,8Z,11Z)-eicosatrienoate + oxidized [NADPH--hemoprotein reductase] + H2O + H(+). It catalyses the reaction (5Z,8Z,11Z,14Z)-eicosatetraenoate + reduced [NADPH--hemoprotein reductase] + O2 = (14R,15S)-epoxy-(5Z,8Z,11Z)-eicosatrienoate + oxidized [NADPH--hemoprotein reductase] + H2O + H(+). The enzyme catalyses (5S)-hydroperoxy-(6E,8Z,11Z,14Z)-eicosatetraenoate = 5-oxo-(6E,8Z,11Z,14Z)-eicosatetraenoate + H2O. It carries out the reaction (12S)-hydroperoxy-(5Z,8Z,10E,14Z)-eicosatetraenoate = 12-oxo-(5Z,8Z,10E,14Z)-eicosatetraenoate + H2O. The catalysed reaction is (15S)-hydroperoxy-(5Z,8Z,11Z,13E)-eicosatetraenoate = 15-oxo-(5Z,8Z,11Z,13E)-eicosatetraenoate + H2O. It catalyses the reaction (13S)-hydroperoxy-(9Z,11E)-octadecadienoate = 13-oxo-(9Z,11E)-octadecadienoate + H2O. It participates in steroid hormone biosynthesis. Its pathway is cofactor metabolism; retinol metabolism. It functions in the pathway lipid metabolism; arachidonate metabolism. Its activity is regulated as follows. Enzyme activity is increased by cytochrome b5. Enzyme activity is increased by liposomes containing anionic phospholipids, phosphatidic acid and cardiolipin. Inhibited by naringenin with an IC(50) of 5 uM. Its function is as follows. A cytochrome P450 monooxygenase involved in the metabolism of various endogenous substrates, including fatty acids, steroid hormones and vitamins. Mechanistically, uses molecular oxygen inserting one oxygen atom into a substrate, and reducing the second into a water molecule, with two electrons provided by NADPH via cytochrome P450 reductase (NADPH--hemoprotein reductase). Exhibits catalytic activity for the formation of hydroxyestrogens from 17beta-estradiol (E2), namely 2- and 4-hydroxy E2. Metabolizes testosterone and progesterone to B or D ring hydroxylated metabolites. May act as a major enzyme for all-trans retinoic acid biosynthesis in extrahepatic tissues. Catalyzes two successive oxidative transformation of all-trans retinol to all-trans retinal and then to the active form all-trans retinoic acid. Catalyzes the epoxidation of double bonds of certain PUFA. Converts arachidonic acid toward epoxyeicosatrienoic acid (EpETrE) regioisomers, 8,9-, 11,12-, and 14,15- EpETrE, that function as lipid mediators in the vascular system. Additionally, displays dehydratase activity toward oxygenated eicosanoids including hydroperoxyeicosatetraenoates (HpETEs). This activity is independent of cytochrome P450 reductase, NADPH, and O2. Also involved in the oxidative metabolism of xenobiotics, particularly converting polycyclic aromatic hydrocarbons and heterocyclic aryl amines procarcinogens to DNA-damaging products. Plays an important role in retinal vascular development. Under ambient/hyperoxic O2 conditions, promotes angiogenesis and capillary morphogenesis of retinal endothelial cells and pericytes, likely by metabolizing the oxygenated products symptomatic of oxidative stress. Also, contributes to oxidative homeostasis and ultrastructural organization and function of trabecular meshwork tissue through modulation of POSTN expression. The sequence is that of Cytochrome P450 1B1 from Rattus norvegicus (Rat).